The sequence spans 99 residues: Probable small ribosomal subunit protein cS23 (99 aa).

It belongs to the chloroplast-specific ribosomal protein cS23 family. In terms of assembly, part of the 30S ribosomal subunit.

In terms of biological role, probably a ribosomal protein or a ribosome-associated protein. The polypeptide is Probable small ribosomal subunit protein cS23 (Synechococcus sp. (strain JA-3-3Ab) (Cyanobacteria bacterium Yellowstone A-Prime)).